The primary structure comprises 175 residues: Nucleoside triphosphate/diphosphate phosphatase (175 aa).

Arginine 23 serves as the catalytic Proton donor. 6 residues coordinate Mg(2+): asparagine 87, aspartate 103, aspartate 105, aspartate 107, aspartate 120, and glutamate 123.

The protein belongs to the Ntdp family. The cofactor is Mg(2+).

It catalyses the reaction a ribonucleoside 5'-triphosphate + H2O = a ribonucleoside 5'-diphosphate + phosphate + H(+). The enzyme catalyses a ribonucleoside 5'-diphosphate + H2O = a ribonucleoside 5'-phosphate + phosphate + H(+). Has nucleoside phosphatase activity towards nucleoside triphosphates and nucleoside diphosphates. In Shouchella clausii (strain KSM-K16) (Alkalihalobacillus clausii), this protein is Nucleoside triphosphate/diphosphate phosphatase.